The sequence spans 464 residues: L-cystine uptake protein TcyP (464 aa).

10 helical membrane-spanning segments follow: residues 3–23 (TLLVGINVAVMLILVGVLYYM), 34–54 (VFTALGIGIIFGLILQFIYEP), 73–93 (YVKLLQMIVMPLILVSIISAF), 107–127 (GLIIGILILTTGIAAAVGIAA), 184–204 (PTSTISVVIFAAFIGIAFIGV), 225–245 (IVMRMVTLILRLTPYGVLALM), 263–283 (FVLASYVALIVMFVIHLLLIA), 347–367 (AGIYPAMLAMMVAPTVGIDPL), 371–391 (FILTLIAVVAISSFGVAGVGG), and 395–415 (FAALIVLSTMNLPIGIVALVI).

Belongs to the dicarboxylate/amino acid:cation symporter (DAACS) (TC 2.A.23) family.

The protein localises to the membrane. In terms of biological role, mediates uptake of L-cystine, the oxidized form of L-cysteine. The protein is L-cystine uptake protein TcyP of Bacillus thuringiensis (strain Al Hakam).